The following is a 123-amino-acid chain: Modulator protein MzrA (123 aa).

Topologically, residues 1 to 8 (MIKRPRWQ) are cytoplasmic. Residues 9–29 (YVLLIALALLALATLLVPCMV) traverse the membrane as a helical segment. Over 30–123 (RTESELRIRA…EFARAPLNLG (94 aa)) the chain is Periplasmic.

This sequence belongs to the MzrA family. Interacts with EnvZ.

It is found in the cell inner membrane. Modulates the activity of the EnvZ/OmpR two-component regulatory system, probably by directly modulating EnvZ enzymatic activity and increasing stability of phosphorylated OmpR. This is Modulator protein MzrA from Serratia proteamaculans (strain 568).